The sequence spans 485 residues: Glutamyl-tRNA(Gln) amidotransferase subunit A (485 aa).

Active-site charge relay system residues include K78 and S153. The active-site Acyl-ester intermediate is the S177.

Belongs to the amidase family. GatA subfamily. In terms of assembly, heterotrimer of A, B and C subunits.

The catalysed reaction is L-glutamyl-tRNA(Gln) + L-glutamine + ATP + H2O = L-glutaminyl-tRNA(Gln) + L-glutamate + ADP + phosphate + H(+). Functionally, allows the formation of correctly charged Gln-tRNA(Gln) through the transamidation of misacylated Glu-tRNA(Gln) in organisms which lack glutaminyl-tRNA synthetase. The reaction takes place in the presence of glutamine and ATP through an activated gamma-phospho-Glu-tRNA(Gln). This Bacillus cereus (strain Q1) protein is Glutamyl-tRNA(Gln) amidotransferase subunit A.